Consider the following 789-residue polypeptide: Endonuclease MutS2 (789 aa).

334 to 341 is a binding site for ATP; the sequence is GPNTGGKT. Positions 690 to 714 are disordered; that stretch reads PEKDIQQSGTGKIMKSKTGDTKSEV. In terms of domain architecture, Smr spans 714 to 789; the sequence is VDVRGKNLEE…GMGVTIVELK (76 aa).

It belongs to the DNA mismatch repair MutS family. MutS2 subfamily. Homodimer. Binds to stalled ribosomes, contacting rRNA.

Endonuclease that is involved in the suppression of homologous recombination and thus may have a key role in the control of bacterial genetic diversity. Its function is as follows. Acts as a ribosome collision sensor, splitting the ribosome into its 2 subunits. Detects stalled/collided 70S ribosomes which it binds and splits by an ATP-hydrolysis driven conformational change. Acts upstream of the ribosome quality control system (RQC), a ribosome-associated complex that mediates the extraction of incompletely synthesized nascent chains from stalled ribosomes and their subsequent degradation. Probably generates substrates for RQC. The protein is Endonuclease MutS2 of Alkaliphilus metalliredigens (strain QYMF).